The sequence spans 298 residues: ADP/ATP translocase 1 (298 aa).

Topologically, residues 1 to 7 are mitochondrial intermembrane; that stretch reads MSDQALS. Ser2 carries the post-translational modification N-acetylserine. A Solcar 1 repeat occupies 6-98; that stretch reads LSFLKDFLAG…FAFKDKYKQI (93 aa). Residue Ser7 is modified to Phosphoserine. The chain crosses the membrane as a helical span at residues 8-37; the sequence is FLKDFLAGGVAAAISKTAVAPIERVKLLLQ. The Mitochondrial matrix segment spans residues 38 to 74; sequence VQHASKQISAEKQYKGIIDCVVRIPKEQGFLSFWRGN. At Lys52 the chain carries N6,N6,N6-trimethyllysine. The residue at position 52 (Lys52) is an N6-methyllysine. The chain crosses the membrane as a helical span at residues 75–99; sequence LANVIRYFPTQALNFAFKDKYKQIF. Residues Arg80 and Lys92 each contribute to the ADP site. Over 100-109 the chain is Mitochondrial intermembrane; the sequence is LGGVDRHKQF. Residues 110 to 130 traverse the membrane as a helical segment; that stretch reads WRYFAGNLASGGAAGATSLCF. Solcar repeat units lie at residues 111 to 201 and 212 to 297; these read RYFA…AKGM and VSWM…IKKF. At 131–178 the chain is on the mitochondrial matrix side; that stretch reads VYPLDFARTRLAADVGKGAAQREFTGLGNCITKIFKSDGLRGLYQGFN. Lys147 bears the N6-succinyllysine mark. Cys160 carries the S-nitrosocysteine modification. The chain crosses the membrane as a helical span at residues 179 to 199; that stretch reads VSVQGIIIYRAAYFGVYDTAK. Residues 200-210 lie on the Mitochondrial intermembrane side of the membrane; the sequence is GMLPDPKNVHI. A helical membrane pass occupies residues 211-231; it reads IVSWMIAQTVTAVAGLVSYPF. Residues 232–273 lie on the Mitochondrial matrix side of the membrane; sequence DTVRRRMMMQSGRKGADIMYTGTVDCWRKIAKDEGPKAFFKG. An ADP-binding site is contributed by Arg235. An important for transport activity region spans residues 235-240; sequence RRRMMM. Positions 235–240 match the Nucleotide carrier signature motif motif; that stretch reads RRRMMM. An N6-succinyllysine mark is found at Lys245 and Lys272. The chain crosses the membrane as a helical span at residues 274–291; that stretch reads AWSNVLRGMGGAFVLVLY. The Mitochondrial intermembrane portion of the chain corresponds to 292-298; it reads DEIKKFV.

It belongs to the mitochondrial carrier (TC 2.A.29) family. Monomer. Found in a complex with ARL2, ARL2BP and SLC25A4/ANT1. Interacts with ARL2BP. Interacts with TIMM44; leading to inhibit the presequence translocase TIMM23, thereby promoting stabilization of PINK1. Post-translationally, under cell death induction, transglutaminated by TGM2. Transglutamination leads to formation of covalent cross-links between a glutamine and the epsilon-amino group of a lysine residue, forming polymers. Detected in heart muscle (at protein level). Detected in heart.

It localises to the mitochondrion inner membrane. The protein resides in the membrane. The enzyme catalyses ADP(in) + ATP(out) = ADP(out) + ATP(in). It carries out the reaction H(+)(in) = H(+)(out). The matrix-open state (m-state) is inhibited by the membrane-permeable bongkrekic acid (BKA). The cytoplasmic-open state (c-state) is inhibited by the membrane-impermeable toxic inhibitor carboxyatractyloside (CATR). Proton transporter activity is inhibited by ADP:ATP antiporter activity. In terms of biological role, ADP:ATP antiporter that mediates import of ADP into the mitochondrial matrix for ATP synthesis, and export of ATP out to fuel the cell. Cycles between the cytoplasmic-open state (c-state) and the matrix-open state (m-state): operates by the alternating access mechanism with a single substrate-binding site intermittently exposed to either the cytosolic (c-state) or matrix (m-state) side of the inner mitochondrial membrane. In addition to its ADP:ATP antiporter activity, also involved in mitochondrial uncoupling and mitochondrial permeability transition pore (mPTP) activity. Plays a role in mitochondrial uncoupling by acting as a proton transporter: proton transport uncouples the proton flows via the electron transport chain and ATP synthase to reduce the efficiency of ATP production and cause mitochondrial thermogenesis. Proton transporter activity is inhibited by ADP:ATP antiporter activity, suggesting that SLC25A4/ANT1 acts as a master regulator of mitochondrial energy output by maintaining a delicate balance between ATP production (ADP:ATP antiporter activity) and thermogenesis (proton transporter activity). Proton transporter activity requires free fatty acids as cofactor, but does not transport it. Probably mediates mitochondrial uncoupling in tissues that do not express UCP1. Also plays a key role in mPTP opening, a non-specific pore that enables free passage of the mitochondrial membranes to solutes of up to 1.5 kDa, and which contributes to cell death. It is however unclear if SLC25A4/ANT1 constitutes a pore-forming component of mPTP or regulates it. Acts as a regulator of mitophagy independently of ADP:ATP antiporter activity: promotes mitophagy via interaction with TIMM44, leading to inhibit the presequence translocase TIMM23, thereby promoting stabilization of PINK1. The chain is ADP/ATP translocase 1 from Bos taurus (Bovine).